The sequence spans 2164 residues: Hemagglutinin A (2164 aa).

Positions 1-25 are cleaved as a signal peptide; that stretch reads MRKLNSLFSLAVLLSLLCWGQTAAA. Peptidase C25-like regions lie at residues 26–539, 540–991, and 992–1443; these read QGGP…TPPP, GGSS…TPPP, and GGTS…TPPP. Disordered regions lie at residues 493-512 and 520-541; these read WDAPNGTPNPNPGTTTLSES and SWKTIDADGDGNNWTTTPPPGG. The segment covering 496 to 508 has biased composition (low complexity); that stretch reads PNGTPNPNPGTTT.

Belongs to the peptidase C25 family.

Its function is as follows. Agglutinates erythrocytes. The sequence is that of Hemagglutinin A (hagA) from Porphyromonas gingivalis (strain ATCC BAA-308 / W83).